The chain runs to 1051 residues: MASEFGILICDKLKENTLEKTNCDVIITGVGKVGVHEEDGVLGYEWEETNYRLGLCEIENTMSISDFVYKQIRCEGAYPILPHYVTDVIKYGMVIHRNDHQIRVDRDEKSIGKIQIQPYFGDMYFSPEYYPATFIKRESLPISVDTIRGYIGARMRGIEARAGRIREGDGNLLECARRWEKAAYERIENEKALRCVAHETDPTYQILKKQRFGFVYPHYYVLNTNYNPTTVTRTSRINDWLLKEKTQGVVKTAEAFSDNAELKTLAERMEEEELTEDIIRAVIRYGAKYATRSGMREDTLSLQELDRYCDSLTTFVHKKKKDEGDDETARTIIRNQWIKGMPRMDFKKEMKITRGPIANWSFFMSIDAFKRNNKVDINPNHQTWKDHIKEVTDQMNRAQQGNNNKPLKVQIDGVSILTSEKYGTVGHWVDWVVDLIMLAQVKMLIKEYKFKRLNSQNLMSGMNKLVGALRCYAYCLILALYDYYGQDIEGFKKGSNSSAILETVIQMFPNFKQEIQANFGINLNIKDKKTIAIRRATMHSDFSSNEEYGYKFVFGWAARGEEVLSNYGDVLSDEVEELFTKLRKKEHWDKVVEDPESYFIDELYQKNPAEVFYSAGYDTDQNVVIDGKMTEGVTYFSKRFVSYWYRVEKITTKHLEFLTEENRKVAQFDFEDYKPMAIGEMGIHASTYKYESLLLGKNRGQKVNDSIALCNYDLALTNFGVSRRQDCCWISSCSAIELSMRANIIIAIFRRIEDKRYENFAKILSGLTQQQDLYFPTYKHYYLFVLQKVLRDERRIDLNRICTELFDTQRRRGILLSFTALRFWNDSEFLGDALMMNFLHRVVFEMENVDVDYGKKWHPLLVSSEKGLRVIAVDVFNSMMGVSTSGWLPYVERICSESDMRRRLNADELELKRWFFDYYATLPLERRGEPRLSFKYEGLTTWIGSNCGGVRDYVVQLLPMRKSKPGLLCIAYGDDVNVQWVEHELRDFLMHEGSLGLVVISGKMLVNKSKLRVRNLKIYNRGTLDSLFLISGGNYTFGNKFLLSKLMAKAE.

It belongs to the orbivirus VP2 family.

The protein localises to the virion. Its function is as follows. The VP2 protein is one of the two proteins (with VP5) which constitute the virus particle outer capsid. It is the major target of the host immunogenic response. This chain is Outer capsid protein VP2 (Segment-2), found in African horse sickness virus (AHSV).